The following is a 373-amino-acid chain: 1-deoxy-D-xylulose 5-phosphate reductoisomerase (373 aa).

T10, G11, S12, I13, R37, and N112 together coordinate NADPH. K113 serves as a coordination point for 1-deoxy-D-xylulose 5-phosphate. NADPH is bound at residue E114. D134 contributes to the Mn(2+) binding site. Residues S135, E136, S160, and H183 each contribute to the 1-deoxy-D-xylulose 5-phosphate site. E136 is a binding site for Mn(2+). Residue G189 coordinates NADPH. 1-deoxy-D-xylulose 5-phosphate is bound by residues S196, N201, K202, and E205. E205 contacts Mn(2+).

This sequence belongs to the DXR family. Requires Mg(2+) as cofactor. The cofactor is Mn(2+).

It catalyses the reaction 2-C-methyl-D-erythritol 4-phosphate + NADP(+) = 1-deoxy-D-xylulose 5-phosphate + NADPH + H(+). The protein operates within isoprenoid biosynthesis; isopentenyl diphosphate biosynthesis via DXP pathway; isopentenyl diphosphate from 1-deoxy-D-xylulose 5-phosphate: step 1/6. In terms of biological role, catalyzes the NADPH-dependent rearrangement and reduction of 1-deoxy-D-xylulose-5-phosphate (DXP) to 2-C-methyl-D-erythritol 4-phosphate (MEP). The protein is 1-deoxy-D-xylulose 5-phosphate reductoisomerase of Persephonella marina (strain DSM 14350 / EX-H1).